The primary structure comprises 114 residues: Hydrogenase maturation factor HypA (114 aa).

A Ni(2+)-binding site is contributed by His2. Positions 73, 76, 89, and 92 each coordinate Zn(2+).

This sequence belongs to the HypA/HybF family.

Functionally, involved in the maturation of [NiFe] hydrogenases. Required for nickel insertion into the metal center of the hydrogenase. The chain is Hydrogenase maturation factor HypA from Caldanaerobacter subterraneus subsp. tengcongensis (strain DSM 15242 / JCM 11007 / NBRC 100824 / MB4) (Thermoanaerobacter tengcongensis).